A 150-amino-acid chain; its full sequence is 3-hydroxyacyl-[acyl-carrier-protein] dehydratase FabZ (150 aa).

H54 is a catalytic residue.

It belongs to the thioester dehydratase family. FabZ subfamily.

It localises to the cytoplasm. It carries out the reaction a (3R)-hydroxyacyl-[ACP] = a (2E)-enoyl-[ACP] + H2O. Its function is as follows. Involved in unsaturated fatty acids biosynthesis. Catalyzes the dehydration of short chain beta-hydroxyacyl-ACPs and long chain saturated and unsaturated beta-hydroxyacyl-ACPs. The polypeptide is 3-hydroxyacyl-[acyl-carrier-protein] dehydratase FabZ (Colwellia psychrerythraea (strain 34H / ATCC BAA-681) (Vibrio psychroerythus)).